A 225-amino-acid chain; its full sequence is Uracil-DNA glycosylase 1 (225 aa).

The Proton acceptor role is filled by Asp-68.

It belongs to the uracil-DNA glycosylase (UDG) superfamily. UNG family.

The protein localises to the cytoplasm. It catalyses the reaction Hydrolyzes single-stranded DNA or mismatched double-stranded DNA and polynucleotides, releasing free uracil.. In terms of biological role, excises uracil residues from the DNA which can arise as a result of misincorporation of dUMP residues by DNA polymerase or due to deamination of cytosine. The polypeptide is Uracil-DNA glycosylase 1 (ung1) (Streptomyces avermitilis (strain ATCC 31267 / DSM 46492 / JCM 5070 / NBRC 14893 / NCIMB 12804 / NRRL 8165 / MA-4680)).